A 395-amino-acid chain; its full sequence is NAD(P)H-quinone oxidoreductase subunit H, chloroplastic (395 aa).

It belongs to the complex I 49 kDa subunit family. In terms of assembly, NDH is composed of at least 16 different subunits, 5 of which are encoded in the nucleus.

The protein resides in the plastid. It localises to the chloroplast thylakoid membrane. The enzyme catalyses a plastoquinone + NADH + (n+1) H(+)(in) = a plastoquinol + NAD(+) + n H(+)(out). It catalyses the reaction a plastoquinone + NADPH + (n+1) H(+)(in) = a plastoquinol + NADP(+) + n H(+)(out). NDH shuttles electrons from NAD(P)H:plastoquinone, via FMN and iron-sulfur (Fe-S) centers, to quinones in the photosynthetic chain and possibly in a chloroplast respiratory chain. The immediate electron acceptor for the enzyme in this species is believed to be plastoquinone. Couples the redox reaction to proton translocation, and thus conserves the redox energy in a proton gradient. This Coffea arabica (Arabian coffee) protein is NAD(P)H-quinone oxidoreductase subunit H, chloroplastic.